A 184-amino-acid chain; its full sequence is Casparian strip membrane protein 1 (184 aa).

Over 1–24 the chain is Cytoplasmic; it reads MKESGEHGETSKAPLNRGVSKGLS. The chain crosses the membrane as a helical span at residues 25–45; the sequence is VLDLILRFIAIIGTLASAIAM. Topologically, residues 46–72 are extracellular; sequence GTTNETLPFFTQFIRFKAQYSDLPTLT. Asparagine 49 carries an N-linked (GlcNAc...) asparagine glycan. Residues 73-93 form a helical membrane-spanning segment; sequence FFVVANSIVCAYLILSLPLSI. The Cytoplasmic segment spans residues 94 to 105; the sequence is VHIIRSRAKFSR. Residues 106 to 126 form a helical membrane-spanning segment; the sequence is LLLIFLDAVMLALVTAGASAA. The Extracellular portion of the chain corresponds to 127–159; sequence AAIVYLAHKGNVRANWLAICQQFDSFCERISGS. The helical transmembrane segment at 160–180 threads the bilayer; the sequence is LIGSFGAMVVLILLILLSAIA. Residues 181-184 lie on the Cytoplasmic side of the membrane; the sequence is LARR.

It belongs to the Casparian strip membrane proteins (CASP) family. As to quaternary structure, homodimer and heterodimers.

Its subcellular location is the cell membrane. Regulates membrane-cell wall junctions and localized cell wall deposition. Required for establishment of the Casparian strip membrane domain (CSD) and the subsequent formation of Casparian strips, a cell wall modification of the root endodermis that determines an apoplastic barrier between the intraorganismal apoplasm and the extraorganismal apoplasm and prevents lateral diffusion. The sequence is that of Casparian strip membrane protein 1 from Panicum virgatum (Blackwell switchgrass).